The primary structure comprises 837 residues: Protein translocase subunit SecA 1 (837 aa).

ATP is bound by residues glutamine 85, 103–107 (GEGKT), and aspartate 492. Residues 791–837 (KGEAINPAEGKPEAKRQPIRKDQHIGRNDPCPCGSGKKYKNCHGKEA) form a disordered region. The segment covering 800–817 (GKPEAKRQPIRKDQHIGR) has biased composition (basic and acidic residues). Zn(2+) is bound by residues cysteine 821, cysteine 823, cysteine 832, and histidine 833. Residues 827-837 (KKYKNCHGKEA) show a composition bias toward basic residues.

Belongs to the SecA family. In terms of assembly, monomer and homodimer. Part of the essential Sec protein translocation apparatus which comprises SecA, SecYEG and auxiliary proteins SecDF. Other proteins may also be involved. The cofactor is Zn(2+).

It is found in the cell membrane. The protein resides in the cytoplasm. It catalyses the reaction ATP + H2O + cellular proteinSide 1 = ADP + phosphate + cellular proteinSide 2.. Functionally, part of the Sec protein translocase complex. Interacts with the SecYEG preprotein conducting channel. Has a central role in coupling the hydrolysis of ATP to the transfer of proteins into and across the cell membrane, serving as an ATP-driven molecular motor driving the stepwise translocation of polypeptide chains across the membrane. The sequence is that of Protein translocase subunit SecA 1 from Listeria monocytogenes serovar 1/2a (strain ATCC BAA-679 / EGD-e).